The chain runs to 132 residues: Large ribosomal subunit protein bL17 (132 aa).

Belongs to the bacterial ribosomal protein bL17 family. In terms of assembly, part of the 50S ribosomal subunit. Contacts protein L32.

This chain is Large ribosomal subunit protein bL17, found in Marinobacter nauticus (strain ATCC 700491 / DSM 11845 / VT8) (Marinobacter aquaeolei).